The sequence spans 7839 residues: Nonribosomal peptide synthetase GRA1 (7839 aa).

Residues 1-23 show a composition bias toward polar residues; the sequence is MALLNGKSTLPNGHNSSIESPNG. A disordered region spans residues 1–26; that stretch reads MALLNGKSTLPNGHNSSIESPNGYTE. The tract at residues 264–650 is adenylation 1; it reads LASPNSCAVH…LGRIDDQVKI (387 aa). A Carrier 1 domain is found at 793 to 866; sequence SAEALVLRQL…LQAEMSEKKK (74 aa). Serine 827 is modified (O-(pantetheine 4'-phosphoryl)serine). The segment at 916 to 1332 is condensation 1; sequence DIYPASPLQE…ILSPSDVAQI (417 aa). The segment at 1351–1742 is adenylation 2; that stretch reads FFTQVKRSPD…QRKDAQLKIR (392 aa). The Carrier 2 domain occupies 1880 to 1957; the sequence is ELETEAERTM…AMSRQATVSD (78 aa). Position 1918 is an O-(pantetheine 4'-phosphoryl)serine (serine 1918). Residues 1997-2413 form a condensation 2 region; sequence DLYPCTPFQE…LISPSDMETI (417 aa). The segment at 2432 to 2828 is adenylation 3; it reads FDRRLSQKHS…GRRDTQLKIR (397 aa). The Carrier 3 domain maps to 2963–3040; it reads IPTTQMEWNL…DLAQAIVLDT (78 aa). Serine 3001 is modified (O-(pantetheine 4'-phosphoryl)serine). The condensation 3 stretch occupies residues 3084-3496; the sequence is DIYPCTPLQD…QVDLISDSDH (413 aa). An adenylation 4 region spans residues 3520–3923; that stretch reads RLAVSNPDAE…GRRDSQVKLR (404 aa). One can recognise a Carrier 4 domain in the interval 4057–4134; it reads RPLTEREKDL…DMAAMTTSLS (78 aa). Serine 4095 carries the O-(pantetheine 4'-phosphoryl)serine modification. The segment at 4234–4569 is condensation 4; the sequence is NLEEFVGRQS…MMNPDDAEEI (336 aa). The segment at 4591–4982 is adenylation 5; sequence HSKGCPDRIA…VSRKDTQVKF (392 aa). One can recognise a Carrier 5 domain in the interval 5113–5189; sequence ALSSDEESQL…DMALCMTSAQ (77 aa). At serine 5150 the chain carries O-(pantetheine 4'-phosphoryl)serine. Residues 5224–5653 form a condensation 5 region; sequence EDIYPCSALQ…VSPSDQAEIL (430 aa). The tract at residues 5671–6069 is adenylation 6; sequence FESRARLQPS…GRRDTQVKLR (399 aa). Residues 6207 to 6282 form the Carrier 6 domain; that stretch reads FPSSLAEQQM…HMAAIATTFT (76 aa). Serine 6243 bears the O-(pantetheine 4'-phosphoryl)serine mark. The segment at 6321-6730 is condensation 6; it reads QDIYPCSALQ…RLADMDLTGP (410 aa). The segment at 6756–7147 is adenylation 7; that stretch reads EQRVKSQPDS…LGRKDSQIKL (392 aa). The Carrier 7 domain occupies 7290-7366; sequence KAATPNEKTL…DLARVSRQSI (77 aa). An O-(pantetheine 4'-phosphoryl)serine modification is found at serine 7327. The segment at 7404 to 7704 is condensation7; sequence HDIYPCTQVQ…LDYAKKRASS (301 aa).

The protein belongs to the NRP synthetase family.

It participates in mycotoxin biosynthesis. In terms of biological role, nonribosomal peptide synthetase; part of the gene cluster that mediates the biosynthesis of gramillins A and B, bicyclic lipopeptides that induce cell death in maize leaves but not in wheat leaves. The nonribosomal peptide synthetase GRA1 incorporates respectively a glutamic adic (Glu), a leucine (Leu), a serine (Ser), a hydroxyglutamine (HOGln), a 2-amino decanoic acid, and 2 cysteins (CysB and CysA). The biosynthesis of 2-amino decanoic acid incorporated in gramillins could be initiated by a fatty acid synthase composed of the alpha and beta subunits FGSG_00036 and FGSG_11656. The cytochrome P450 monooxygenase FGSG_15680 could hydroxylate the fatty acid chain. Subsequent oxidation to the ketone by the oxidoreductase FGSG_00048 and transamination by aminotransferase FGSG_00049 could form 2-amino-decanoic acid. On the other hand, FGSG_15680 could also be responsible for the HO-modified glutamine at the gamma-position. Whether hydroxylation occurs on the fully assembled product or on the Gln residue prior to assembly into the gramillins requires further proof. The thioredoxin FGSG_00043 could also be required for the disulfide-bond formation between CysA and CysB. The specific involvement of the remaining proteins from the cluster is more difficult to discern, but could have broader regulatory (FGSG_00040 and FGSG_11657) or enzymatic functions (FGSG_00044 and FGSG_00045). The final C-domain of GRA1 does not possess the expected sequence of a termination CT domain, often implicated in macrocyclization and release of a cyclopeptidein fungal NRPs; and the thioesterase FGSG_00047 may act in concert with the terminal C-domain of GRA1 to catalyze the formation of the macrocyclic anhydride and release of the products. This Gibberella zeae (strain ATCC MYA-4620 / CBS 123657 / FGSC 9075 / NRRL 31084 / PH-1) (Wheat head blight fungus) protein is Nonribosomal peptide synthetase GRA1.